The following is a 748-amino-acid chain: E3 ubiquitin-protein ligase SMURF2 (748 aa).

Residues Met-1 to Lys-119 form the C2 domain. Residue Lys-119 forms a Glycyl lysine isopeptide (Lys-Gly) (interchain with G-Cter in ubiquitin) linkage. 3 consecutive WW domains span residues Asn-157–Arg-190, Pro-251–Val-284, and Gly-297–Leu-330. Positions Arg-414–Glu-748 constitute an HECT domain. The active-site Glycyl thioester intermediate is Cys-716.

Interacts (via WW domains) with SMAD1. Interacts (via WW domains) with SMAD2 (via PY-motif). Interacts (via WW domains) with SMAD3 (via PY-motif). Interacts with SMAD6. Interacts with SMAD7 (via PY-motif) and TGFBR1; SMAD7 recruits SMURF2 to the TGF-beta receptor and regulates its degradation. Does not interact with SMAD4; SMAD4 lacks a PY-motif. Interacts with AIMP1. Interacts with SNON. Interacts with STAMBP and RNF11. May interact with NDFIP1 and NDFIP2; this interaction induces the E3 ubiquitin-protein ligase activity. Interacts with TTC3. In terms of assembly, (Microbial infection) Interacts (via WW domains) with EBOV and MARV VP40 (via PPXY motif); the interaction facilitates VP40 virus-like particle budding. In terms of processing, auto-ubiquitinated and ubiquitinated in the presence of RNF11 and UBE2D1. Ubiquitinated by the SCF(FBXL15) complex and TTC3, leading to its degradation by the proteasome. 'Lys-48'-linked polyubiquitination mediated by TRAF4 at Lys-119 leads to SMURF2 proteasomal degradation. As to expression, widely expressed.

It localises to the nucleus. Its subcellular location is the cytoplasm. The protein localises to the cell membrane. It is found in the membrane raft. It carries out the reaction S-ubiquitinyl-[E2 ubiquitin-conjugating enzyme]-L-cysteine + [acceptor protein]-L-lysine = [E2 ubiquitin-conjugating enzyme]-L-cysteine + N(6)-ubiquitinyl-[acceptor protein]-L-lysine.. It functions in the pathway protein modification; protein ubiquitination. Activated by NDFIP1- and NDFIP2-binding. Its function is as follows. E3 ubiquitin-protein ligase which accepts ubiquitin from an E2 ubiquitin-conjugating enzyme in the form of a thioester and then directly transfers the ubiquitin to targeted substrates. Interacts with SMAD7 to trigger SMAD7-mediated transforming growth factor beta/TGF-beta receptor ubiquitin-dependent degradation, thereby down-regulating TGF-beta signaling. In addition, interaction with SMAD7 activates autocatalytic degradation, which is prevented by interaction with AIMP1. Also forms a stable complex with TGF-beta receptor-mediated phosphorylated SMAD1, SMAD2 and SMAD3, and targets SMAD1 and SMAD2 for ubiquitination and proteasome-mediated degradation. SMAD2 may recruit substrates, such as SNON, for ubiquitin-dependent degradation. Negatively regulates TGFB1-induced epithelial-mesenchymal transition and myofibroblast differentiation. In terms of biological role, (Microbial infection) In case of filoviruses Ebola/EBOV and Marburg/MARV infection, the complex formed by viral matrix protein VP40 and SMURF2 facilitates virus budding. This is E3 ubiquitin-protein ligase SMURF2 from Homo sapiens (Human).